The following is a 365-amino-acid chain: Chorismate synthase (365 aa).

R48 and R54 together coordinate NADP(+). FMN-binding positions include 131–133 (RSS), 243–244 (NA), G288, 303–307 (KPTSS), and R329.

This sequence belongs to the chorismate synthase family. As to quaternary structure, homotetramer. It depends on FMNH2 as a cofactor.

It carries out the reaction 5-O-(1-carboxyvinyl)-3-phosphoshikimate = chorismate + phosphate. The protein operates within metabolic intermediate biosynthesis; chorismate biosynthesis; chorismate from D-erythrose 4-phosphate and phosphoenolpyruvate: step 7/7. Its function is as follows. Catalyzes the anti-1,4-elimination of the C-3 phosphate and the C-6 proR hydrogen from 5-enolpyruvylshikimate-3-phosphate (EPSP) to yield chorismate, which is the branch point compound that serves as the starting substrate for the three terminal pathways of aromatic amino acid biosynthesis. This reaction introduces a second double bond into the aromatic ring system. The sequence is that of Chorismate synthase from Rhizobium etli (strain ATCC 51251 / DSM 11541 / JCM 21823 / NBRC 15573 / CFN 42).